The chain runs to 589 residues: Probable cytochrome P450 49a1 (589 aa).

Residues 56–90 are disordered; it reads TGESSNPKKLNVSQQPVTSVATTRTTASSLPAETT. The segment covering 57–71 has biased composition (polar residues); the sequence is GESSNPKKLNVSQQP. The segment covering 72–84 has biased composition (low complexity); the sequence is VTSVATTRTTASS. Residue C536 participates in heme binding.

Belongs to the cytochrome P450 family. Heme is required as a cofactor.

It localises to the endoplasmic reticulum membrane. It is found in the microsome membrane. Functionally, may be involved in the metabolism of insect hormones and in the breakdown of synthetic insecticides. The protein is Probable cytochrome P450 49a1 (Cyp49a1) of Drosophila melanogaster (Fruit fly).